The sequence spans 212 residues: Ribonuclease HII (212 aa).

An RNase H type-2 domain is found at 20–209 (TCVVGVDEVG…VHNILYQEAS (190 aa)). Positions 26, 27, and 117 each coordinate a divalent metal cation.

Belongs to the RNase HII family. The cofactor is Mn(2+). Requires Mg(2+) as cofactor.

Its subcellular location is the cytoplasm. The catalysed reaction is Endonucleolytic cleavage to 5'-phosphomonoester.. Endonuclease that specifically degrades the RNA of RNA-DNA hybrids. The protein is Ribonuclease HII of Cereibacter sphaeroides (strain ATCC 17023 / DSM 158 / JCM 6121 / CCUG 31486 / LMG 2827 / NBRC 12203 / NCIMB 8253 / ATH 2.4.1.) (Rhodobacter sphaeroides).